A 95-amino-acid chain; its full sequence is MKKYEVMYIIRPNIDEESKKAVIERFNNVLTSNGAEITGTKDWGKRRLAYEINDFRDGFYQILNVQSEAAAVAEFDRLAKISDDIIRHIVVKEEE.

Belongs to the bacterial ribosomal protein bS6 family.

In terms of biological role, binds together with bS18 to 16S ribosomal RNA. This chain is Small ribosomal subunit protein bS6, found in Bacillus velezensis (strain DSM 23117 / BGSC 10A6 / LMG 26770 / FZB42) (Bacillus amyloliquefaciens subsp. plantarum).